Reading from the N-terminus, the 300-residue chain is Diaminopimelate epimerase (300 aa).

Residues N15, Q47, and N67 each coordinate substrate. The active-site Proton donor is C76. Substrate contacts are provided by residues 77-78 (GN), N163, N197, and 215-216 (ER). The active-site Proton acceptor is the C224. Substrate is bound at residue 225 to 226 (GS). A disordered region spans residues 275-300 (SGTFDPATGEWSRDAQNDKPTDRGAA). The segment covering 285–300 (WSRDAQNDKPTDRGAA) has biased composition (basic and acidic residues).

This sequence belongs to the diaminopimelate epimerase family. Homodimer.

Its subcellular location is the cytoplasm. The enzyme catalyses (2S,6S)-2,6-diaminopimelate = meso-2,6-diaminopimelate. The protein operates within amino-acid biosynthesis; L-lysine biosynthesis via DAP pathway; DL-2,6-diaminopimelate from LL-2,6-diaminopimelate: step 1/1. Catalyzes the stereoinversion of LL-2,6-diaminopimelate (L,L-DAP) to meso-diaminopimelate (meso-DAP), a precursor of L-lysine and an essential component of the bacterial peptidoglycan. The protein is Diaminopimelate epimerase of Brucella anthropi (strain ATCC 49188 / DSM 6882 / CCUG 24695 / JCM 21032 / LMG 3331 / NBRC 15819 / NCTC 12168 / Alc 37) (Ochrobactrum anthropi).